A 264-amino-acid chain; its full sequence is Nuclear egress protein 1 (264 aa).

Residues 1–12 show a composition bias toward basic residues; that stretch reads MTVHKSRIRRSR. The interval 1-22 is disordered; it reads MTVHKSRIRRSRSLSVTHRIQK. A CCCH-type zinc finger spans residues 83–187; the sequence is CLEFSPYANE…HIVFQSRTLH (105 aa).

The protein belongs to the herpesviridae NEC1 protein family. In terms of assembly, forms a heterohexameric complex with NEC2. Interacts with capsid vertex specific component 2/CVC2; this interaction directs the capsid to the host inner nuclear membrane to initiate budding. Phosphorylated at serine residues in the N-terminus. This phosphorylation regulates the localization within the inner nuclear membrane.

Its subcellular location is the host nucleus inner membrane. Functionally, plays an essential role in virion nuclear egress, the first step of virion release from infected cell. Within the host nucleus, NEC1 interacts with the newly formed capsid through the vertexes and directs it to the inner nuclear membrane by associating with NEC2. Induces the budding of the capsid at the inner nuclear membrane as well as its envelopment into the perinuclear space. There, the NEC1/NEC2 complex promotes the fusion of the enveloped capsid with the outer nuclear membrane and the subsequent release of the viral capsid into the cytoplasm where it will reach the secondary budding sites in the host Golgi or trans-Golgi network. The protein is Nuclear egress protein 1 of Human herpesvirus 6A (strain Uganda-1102) (HHV-6 variant A).